Here is a 290-residue protein sequence, read N- to C-terminus: Eukaryotic translation initiation factor 3 subunit G (290 aa).

The segment covering methionine 1 to alanine 12 has biased composition (basic and acidic residues). 2 disordered regions span residues methionine 1–alanine 30 and alanine 173–alanine 192. The RRM domain maps to proline 204 to proline 285.

The protein belongs to the eIF-3 subunit G family. Component of the eukaryotic translation initiation factor 3 (eIF-3) complex.

It is found in the cytoplasm. Its function is as follows. RNA-binding component of the eukaryotic translation initiation factor 3 (eIF-3) complex, which is involved in protein synthesis of a specialized repertoire of mRNAs and, together with other initiation factors, stimulates binding of mRNA and methionyl-tRNAi to the 40S ribosome. The eIF-3 complex specifically targets and initiates translation of a subset of mRNAs involved in cell proliferation. This subunit can bind 18S rRNA. The sequence is that of Eukaryotic translation initiation factor 3 subunit G from Cryptococcus neoformans var. neoformans serotype D (strain B-3501A) (Filobasidiella neoformans).